The sequence spans 439 residues: Protein translocase subunit SecY (439 aa).

The next 10 membrane-spanning stretches (helical) occupy residues 23–43, 77–97, 125–145, 154–174, 187–207, 217–237, 274–294, 317–337, 369–389, and 397–417; these read IASV…PIPG, IFAL…LLTL, LVLA…ISGM, FYFY…LMWL, ISII…VHTI, ILLF…VVFI, VIPA…ISWF, YLIL…GLVF, IMIR…LIPE, and VPFY…MDFI.

Belongs to the SecY/SEC61-alpha family. In terms of assembly, component of the Sec protein translocase complex. Heterotrimer consisting of SecY, SecE and SecG subunits. The heterotrimers can form oligomers, although 1 heterotrimer is thought to be able to translocate proteins. Interacts with the ribosome. Interacts with SecDF, and other proteins may be involved. Interacts with SecA.

The protein localises to the cell membrane. Its function is as follows. The central subunit of the protein translocation channel SecYEG. Consists of two halves formed by TMs 1-5 and 6-10. These two domains form a lateral gate at the front which open onto the bilayer between TMs 2 and 7, and are clamped together by SecE at the back. The channel is closed by both a pore ring composed of hydrophobic SecY resides and a short helix (helix 2A) on the extracellular side of the membrane which forms a plug. The plug probably moves laterally to allow the channel to open. The ring and the pore may move independently. This is Protein translocase subunit SecY from Buchnera aphidicola subsp. Schizaphis graminum (strain Sg).